The following is a 392-amino-acid chain: uncharacterized protein (392 aa).

This sequence belongs to the ROK (NagC/XylR) family.

This is an uncharacterized protein from Sinorhizobium fredii (strain NBRC 101917 / NGR234).